The following is a 265-amino-acid chain: MTIKAVIFDWAGTTIDYGSRAPIVAFQKAFANVGIQISEAEIRQDMGLDKYTHIHKIMDLPAIQNDWQARFQVLPTEDDCNQIFSNFKAILLSSLTEFGQLKPGMSAVIDYLTAHNISYGTTTGYDAEMLALVLPIAAKQGYRPAVNITSEQTGGVGRPAPAMLALAAEQLTVTDPTTVMKIGDSVNDILEGNNADAVSVGIIDGSNIMGLSELAFNALSPAEQAERRAHVTAAYQRAGADYILQSMAELPALLDQINQPVATDH.

D9 serves as the catalytic Nucleophile. Positions 9 and 11 each coordinate Mg(2+). K50 serves as the catalytic Schiff-base intermediate with substrate. D184 lines the Mg(2+) pocket.

Belongs to the HAD-like hydrolase superfamily. PhnX family. In terms of assembly, homodimer. Requires Mg(2+) as cofactor.

It catalyses the reaction phosphonoacetaldehyde + H2O = acetaldehyde + phosphate + H(+). In terms of biological role, involved in phosphonate degradation. The sequence is that of Phosphonoacetaldehyde hydrolase from Lactiplantibacillus plantarum (strain ATCC BAA-793 / NCIMB 8826 / WCFS1) (Lactobacillus plantarum).